Here is a 148-residue protein sequence, read N- to C-terminus: Oleosin 1 (148 aa).

Residue alanine 2 is modified to N-acetylalanine. Residues 2–28 (ADQHFQQPLHFQGSYGQQQPRSYQVAK) are polar. A hydrophobic region spans residues 29 to 148 (AATAVTAGGS…HVPSGQQQSS (120 aa)). The next 2 helical transmembrane spans lie at 37–57 (GSLL…LTIA) and 81–101 (GFLT…WIYK).

It belongs to the oleosin family.

The protein resides in the lipid droplet. The protein localises to the membrane. In terms of biological role, may have a structural role to stabilize the lipid body during desiccation of the seed by preventing coalescence of the oil. Probably interacts with both lipid and phospholipid moieties of lipid bodies. May also provide recognition signals for specific lipase anchorage in lipolysis during seedling growth. The chain is Oleosin 1 (OLE1) from Prunus dulcis (Almond).